A 280-amino-acid chain; its full sequence is Movement protein (280 aa).

The tract at residues 248–267 (ESEELNVESPPAAIGSSSAS) is disordered. Positions 255–267 (ESPPAAIGSSSAS) are enriched in low complexity.

This sequence belongs to the cucumovirus movement protein family.

The protein resides in the host cell junction. It is found in the host plasmodesma. Functionally, transports viral genome to neighboring plant cells directly through plasmosdesmata, without any budding. The movement protein allows efficient cell to cell propagation, by bypassing the host cell wall barrier. Acts by forming a tubular structure at the host plasmodesmata, enlarging it enough to allow free passage of virion capsids. The chain is Movement protein from Cucumis sativus (Cucumber).